The sequence spans 111 residues: X antigen family member 3 (111 aa).

Positions 1–111 are disordered; that stretch reads MIWRGRSTYR…PEGGDRQPQV (111 aa). The segment covering 29–40 has biased composition (acidic residues); sequence PGDEEPQQEEPP. Positions 97–111 are enriched in basic and acidic residues; that stretch reads EQFKMPEGGDRQPQV.

It belongs to the GAGE family.

The protein is X antigen family member 3 (XAGE3) of Homo sapiens (Human).